The primary structure comprises 447 residues: UPF0210 protein lp_2507 (447 aa).

This sequence belongs to the UPF0210 family. As to quaternary structure, homodimer.

In Lactiplantibacillus plantarum (strain ATCC BAA-793 / NCIMB 8826 / WCFS1) (Lactobacillus plantarum), this protein is UPF0210 protein lp_2507.